The following is a 72-amino-acid chain: Neuropeptide IMFamide (72 aa).

An N-terminal signal peptide occupies residues 1–24 (MMRFTIGVVCLVAVLLSLAEVSEA). Position 36 is a phenylalanine amide (phenylalanine 36). Positions 40–72 (GPTEYDQRGKTFTALCEIATEACQAWFPSTENK) are excised as a propeptide.

As to expression, expressed in corpora cardiaca (CC), corpora allata (CA), antennal lobe (AL) and gnathal ganglion (GNG) (at protein level). Expression detected in only a few animals (at protein level).

Its subcellular location is the secreted. The chain is Neuropeptide IMFamide from Agrotis ipsilon (Black cutworm moth).